A 65-amino-acid chain; its full sequence is uncharacterized protein (65 aa).

This is an uncharacterized protein from Saccharomyces cerevisiae (strain ATCC 204508 / S288c) (Baker's yeast).